A 320-amino-acid polypeptide reads, in one-letter code: Thioredoxin reductase (320 aa).

Residue 36 to 43 (TGMEQGGQ) participates in FAD binding. A disulfide bond links Cys-136 and Cys-139. FAD is bound at residue 287-296 (DVTDHVYRQA).

This sequence belongs to the class-II pyridine nucleotide-disulfide oxidoreductase family. In terms of assembly, homodimer. FAD serves as cofactor.

The protein resides in the cytoplasm. The catalysed reaction is [thioredoxin]-dithiol + NADP(+) = [thioredoxin]-disulfide + NADPH + H(+). In Coxiella burnetii (strain RSA 493 / Nine Mile phase I), this protein is Thioredoxin reductase (trxB).